We begin with the raw amino-acid sequence, 340 residues long: Entry-fusion complex protein OPG094 (340 aa).

The tract at residues 1 to 20 (MGGGVSVELPKRDPPPGVPT) is disordered. Residue glycine 2 is the site of N-myristoyl glycine; by host attachment. Over 2 to 319 (GGGVSVELPK…VQHNIKHSFD (318 aa)) the chain is Virion surface. A helical; Signal-anchor for type II membrane protein transmembrane segment spans residues 320–340 (LKLHLISLLSLLVIWILIVAI).

It belongs to the orthopoxvirus OPG086 family. Interacts with OPG143. Component of the entry fusion complex (EFC) composed of OPG053, OPG076, OPG086, OPG094, OPG095, OPG099, OPG107, OPG143, OPG104, OPG147 and OPG155. Except for OPG095 and OPG053, each of the EFC proteins is required for assembly or stability of the complex. In terms of processing, unglycosylated because produced in viral factories instead of the classic ER -Golgi route.

It is found in the virion membrane. Functionally, component of the entry fusion complex (EFC), which consists of 11 proteins. During cell infection, this complex mediates entry of the virion core into the host cytoplasm by a two-step mechanism consisting of lipid mixing of the viral and cellular membranes and subsequent pore formation. This chain is Entry-fusion complex protein OPG094 (OPG094), found in Cynomys gunnisoni (Gunnison's prairie dog).